The chain runs to 415 residues: MKAVGLVVEYNPFHNGHRYHAEQAKIKTDSSVAAAVMSGPFLQRGEPAAVSKWARTKMALENGVDIVIELPYIYAVQKAELFARGSVSLLHHLGCSSLFFGSENGRIEPFIEASEAFSRKEDDCSLILKEELKKGLSYPAAASKAFSHIFKGRDMLDLSKPNNILGFHYVRAIHTSGSAMKPYTTARIASQYHDAELPGDNSRIASATSIRKALIEKGTAAARSFLPEASARELEAYRNSYGIWHSTEDYFSYVKYSLSTLSAEELSRIYEVEEGLEHRILRTIRQARSYREMMERLKTKRYTWTRLQRMNTHILTRTKKEDMHRLLKPSSAPYIRLLGMTKKGQAYLSAKKKELTAPLVSKLSSFSHPALDLDILAGRVYSLPINEPERTLFEKQEFSQAPIRYDEDEKRFLNA.

Residues 7-20 (VVEY…HRYH), glycine 101, asparagine 162, and 187-188 (RI) each bind ATP.

The protein belongs to the TmcAL family.

It localises to the cytoplasm. It carries out the reaction cytidine(34) in elongator tRNA(Met) + acetate + ATP = N(4)-acetylcytidine(34) in elongator tRNA(Met) + AMP + diphosphate. Catalyzes the formation of N(4)-acetylcytidine (ac(4)C) at the wobble position of elongator tRNA(Met), using acetate and ATP as substrates. First activates an acetate ion to form acetyladenylate (Ac-AMP) and then transfers the acetyl group to tRNA to form ac(4)C34. This chain is tRNA(Met) cytidine acetate ligase, found in Bacillus velezensis (strain DSM 23117 / BGSC 10A6 / LMG 26770 / FZB42) (Bacillus amyloliquefaciens subsp. plantarum).